The following is a 137-amino-acid chain: Small ribosomal subunit protein bS6 (137 aa).

Residues 113 to 137 (EEQREKKNFRKPFIKREEAATKENK) are disordered. Positions 126 to 137 (IKREEAATKENK) are enriched in basic and acidic residues.

The protein belongs to the bacterial ribosomal protein bS6 family.

Functionally, binds together with bS18 to 16S ribosomal RNA. The chain is Small ribosomal subunit protein bS6 from Mycoplasma capricolum subsp. capricolum (strain California kid / ATCC 27343 / NCTC 10154).